The primary structure comprises 105 residues: Flagellar transcriptional regulator FlhD (105 aa).

The protein belongs to the FlhD family. In terms of assembly, homodimer; disulfide-linked. Forms a heterohexamer composed of two FlhC and four FlhD subunits. Each FlhC binds a FlhD dimer, forming a heterotrimer, and a hexamer assembles by dimerization of two heterotrimers.

The protein localises to the cytoplasm. Functionally, functions in complex with FlhC as a master transcriptional regulator that regulates transcription of several flagellar and non-flagellar operons by binding to their promoter region. Activates expression of class 2 flagellar genes, including fliA, which is a flagellum-specific sigma factor that turns on the class 3 genes. Also regulates genes whose products function in a variety of physiological pathways. This chain is Flagellar transcriptional regulator FlhD, found in Nitrosomonas europaea (strain ATCC 19718 / CIP 103999 / KCTC 2705 / NBRC 14298).